Reading from the N-terminus, the 366-residue chain is Ribosome-binding ATPase YchF (366 aa).

Residues 3–259 enclose the OBG-type G domain; the sequence is LTAGIVGLPN…LEGEEKQMFL (257 aa). 12–17 is a binding site for ATP; sequence NVGKST. Mg(2+) contacts are provided by serine 16 and threonine 36. Positions 281 to 364 constitute a TGS domain; the sequence is GLATYFTAGE…QDGDVIHFRF (84 aa).

The protein belongs to the TRAFAC class OBG-HflX-like GTPase superfamily. OBG GTPase family. YchF/OLA1 subfamily. Requires Mg(2+) as cofactor.

ATPase that binds to both the 70S ribosome and the 50S ribosomal subunit in a nucleotide-independent manner. The polypeptide is Ribosome-binding ATPase YchF (Bacillus subtilis (strain 168)).